The primary structure comprises 307 residues: Ornithine carbamoyltransferase (307 aa).

Residues 50–53, Gln77, Arg101, and 128–131 each bind carbamoyl phosphate; these read STRT and HPCQ. L-ornithine contacts are provided by residues Asn160, Asp224, and 228–229; that span reads SM. Residues 264 to 265 and Arg292 contribute to the carbamoyl phosphate site; that span reads CL.

It belongs to the aspartate/ornithine carbamoyltransferase superfamily. OTCase family.

The protein localises to the cytoplasm. It catalyses the reaction carbamoyl phosphate + L-ornithine = L-citrulline + phosphate + H(+). It functions in the pathway amino-acid biosynthesis; L-arginine biosynthesis; L-arginine from L-ornithine and carbamoyl phosphate: step 1/3. Functionally, reversibly catalyzes the transfer of the carbamoyl group from carbamoyl phosphate (CP) to the N(epsilon) atom of ornithine (ORN) to produce L-citrulline. The polypeptide is Ornithine carbamoyltransferase (Clavibacter sepedonicus (Clavibacter michiganensis subsp. sepedonicus)).